We begin with the raw amino-acid sequence, 50 residues long: U37-theraphotoxin-Cg1a (50 aa).

Positions 1-19 (MRVLLIIAGLALLSVVCYT) are cleaved as a signal peptide.

The protein belongs to the neurotoxin 10 (Hwtx-1) family. 67 (Jztx-67) subfamily. In terms of tissue distribution, expressed by the venom gland.

Its subcellular location is the secreted. The protein is U37-theraphotoxin-Cg1a of Chilobrachys guangxiensis (Chinese earth tiger tarantula).